The primary structure comprises 487 residues: MQSAVDLGGRPIHFIGVGGIGMSALAHILLKRQLPISGSDARANHITQKLESQGAQIFSRQEATNIKQLCQGSSAPPQVICSTAIHEDNPEYQAAVQAGCPIFHRSDVLAALMQEFPQSIAIAGTHGKTTTSSLVGYLLLQASLDPTIIVGGEVAAWGGNARTGESPYLVAEADESDGSLVKFFPHIGVITNIELDHPDHYTSLDQVVSIFQEFVDHCHTLIVSVDCPTIADRFLALATDQSMITYSLSSKVSADYTVQNIDYSGQGTIVEVLERGESLGQLELPLLGEHNLSNALAAVAVGRYVGLEFPAIAKALRTFSGAKRRFEIYGEAQGICLIDDYAHHPSEIQVTLASAKLQAQAAAATYSQSRVVAVFQPHRYSRAATFFQEFSQSFQDADLVVVTDIYSAGEANPGTINGKKLADAIAANHSVVTFQPTLTNVIDFLQGHLQSGDVVLFLGAGDLNRIIPDLLTHFQVSSKPSPEVVLK.

124 to 130 (GTHGKTT) provides a ligand contact to ATP.

The protein belongs to the MurCDEF family.

The protein localises to the cytoplasm. It carries out the reaction UDP-N-acetyl-alpha-D-muramate + L-alanine + ATP = UDP-N-acetyl-alpha-D-muramoyl-L-alanine + ADP + phosphate + H(+). The protein operates within cell wall biogenesis; peptidoglycan biosynthesis. Cell wall formation. The sequence is that of UDP-N-acetylmuramate--L-alanine ligase from Acaryochloris marina (strain MBIC 11017).